Here is a 497-residue protein sequence, read N- to C-terminus: Squalene monooxygenase (497 aa).

Residues 29–30 (VV), 49–50 (ER), R57, R159, V175, D336, and M349 each bind FAD. 2 helical membrane passes run 434–454 (FLSG…TVAL) and 467–487 (LGFL…AKVF).

Belongs to the squalene monooxygenase family. FAD serves as cofactor.

It localises to the microsome membrane. It is found in the endoplasmic reticulum membrane. The catalysed reaction is squalene + reduced [NADPH--hemoprotein reductase] + O2 = (S)-2,3-epoxysqualene + oxidized [NADPH--hemoprotein reductase] + H2O + H(+). Its pathway is terpene metabolism; lanosterol biosynthesis; lanosterol from farnesyl diphosphate: step 2/3. Its function is as follows. Catalyzes the stereospecific oxidation of squalene to (S)-2,3-epoxysqualene, and is considered to be a rate-limiting enzyme in steroid biosynthesis. The protein is Squalene monooxygenase (ERG1) of Eremothecium gossypii (strain ATCC 10895 / CBS 109.51 / FGSC 9923 / NRRL Y-1056) (Yeast).